The primary structure comprises 489 residues: Rhamnulokinase (489 aa).

Residue 13-17 participates in ATP binding; sequence ASSGR. Residues C68 and C222 are joined by a disulfide bond. Substrate is bound by residues G83 and 236–238; that span reads HDT. The Proton acceptor role is filled by D237. T259 is an ATP binding site. N296 provides a ligand contact to substrate. Q304 lines the ATP pocket. C353 and C370 are disulfide-bonded. G402 lines the ATP pocket. C413 and C417 are joined by a disulfide.

The protein belongs to the rhamnulokinase family. Mg(2+) serves as cofactor.

The enzyme catalyses L-rhamnulose + ATP = L-rhamnulose 1-phosphate + ADP + H(+). It functions in the pathway carbohydrate degradation; L-rhamnose degradation; glycerone phosphate from L-rhamnose: step 2/3. In terms of biological role, involved in the catabolism of L-rhamnose (6-deoxy-L-mannose). Catalyzes the transfer of the gamma-phosphate group from ATP to the 1-hydroxyl group of L-rhamnulose to yield L-rhamnulose 1-phosphate. The sequence is that of Rhamnulokinase from Salmonella enteritidis PT4 (strain P125109).